A 448-amino-acid chain; its full sequence is MSDRSLLVVVLAAGEGTRMASRLPKVLHKVAGRTMLHHVLAATRAAGATRTAVVVGPGREDVAAEVRKIVPDAEVFEQTERLGTAHAVLAARAALENGADDVLVLYADTPLVRPETLGLLRAPLKAGAAVAALGFEPADPTGYGRLVTAGDELVAIREEKDASAAEKAIRFCNAGLMALAGAHALSILERIGNANAKGEYYLTDAVEIARADGLSAVAARADADEVAGVNSRVQLAEAEAILQRRLRLAAMAGGATLVAPETVFLSADTVLGRDVIVEPHVVFGPGVSVGDDVVIHSFCHLEGARLESGVTIGPYARLRPGTQLDSGVRIGNFVETKAAHIESGAKVNHLSYVGDAHVGADANLGAGTITCNYDGFGKYRTEIGAGAFIGVNSALVAPVTVGKGAFVGTGAVITSDVPEDALAIARSRQVVKEGWAKAFRAARSKPKG.

The pyrophosphorylase stretch occupies residues 1–232 (MSDRSLLVVV…ADEVAGVNSR (232 aa)). UDP-N-acetyl-alpha-D-glucosamine contacts are provided by residues 11–14 (LAAG), K25, Q78, and 83–84 (GT). D108 contributes to the Mg(2+) binding site. Residues G144, E158, N173, and N230 each contribute to the UDP-N-acetyl-alpha-D-glucosamine site. N230 contributes to the Mg(2+) binding site. The tract at residues 233 to 253 (VQLAEAEAILQRRLRLAAMAG) is linker. Residues 254–448 (GATLVAPETV…FRAARSKPKG (195 aa)) form an N-acetyltransferase region. Residues R319 and K337 each contribute to the UDP-N-acetyl-alpha-D-glucosamine site. H349 serves as the catalytic Proton acceptor. Y352 and N363 together coordinate UDP-N-acetyl-alpha-D-glucosamine. Acetyl-CoA-binding positions include A366, 372–373 (NY), T409, and R426.

The protein in the N-terminal section; belongs to the N-acetylglucosamine-1-phosphate uridyltransferase family. It in the C-terminal section; belongs to the transferase hexapeptide repeat family. Homotrimer. Mg(2+) serves as cofactor.

The protein localises to the cytoplasm. The enzyme catalyses alpha-D-glucosamine 1-phosphate + acetyl-CoA = N-acetyl-alpha-D-glucosamine 1-phosphate + CoA + H(+). It catalyses the reaction N-acetyl-alpha-D-glucosamine 1-phosphate + UTP + H(+) = UDP-N-acetyl-alpha-D-glucosamine + diphosphate. It participates in nucleotide-sugar biosynthesis; UDP-N-acetyl-alpha-D-glucosamine biosynthesis; N-acetyl-alpha-D-glucosamine 1-phosphate from alpha-D-glucosamine 6-phosphate (route II): step 2/2. Its pathway is nucleotide-sugar biosynthesis; UDP-N-acetyl-alpha-D-glucosamine biosynthesis; UDP-N-acetyl-alpha-D-glucosamine from N-acetyl-alpha-D-glucosamine 1-phosphate: step 1/1. The protein operates within bacterial outer membrane biogenesis; LPS lipid A biosynthesis. Catalyzes the last two sequential reactions in the de novo biosynthetic pathway for UDP-N-acetylglucosamine (UDP-GlcNAc). The C-terminal domain catalyzes the transfer of acetyl group from acetyl coenzyme A to glucosamine-1-phosphate (GlcN-1-P) to produce N-acetylglucosamine-1-phosphate (GlcNAc-1-P), which is converted into UDP-GlcNAc by the transfer of uridine 5-monophosphate (from uridine 5-triphosphate), a reaction catalyzed by the N-terminal domain. The chain is Bifunctional protein GlmU from Xanthobacter autotrophicus (strain ATCC BAA-1158 / Py2).